A 245-amino-acid chain; its full sequence is Carboxy-S-adenosyl-L-methionine synthase (245 aa).

Residues tyrosine 42, 67–69 (GCS), 92–93 (DN), 120–121 (DI), asparagine 135, and arginine 202 contribute to the S-adenosyl-L-methionine site.

This sequence belongs to the class I-like SAM-binding methyltransferase superfamily. Cx-SAM synthase family. In terms of assembly, homodimer.

The catalysed reaction is prephenate + S-adenosyl-L-methionine = carboxy-S-adenosyl-L-methionine + 3-phenylpyruvate + H2O. Its function is as follows. Catalyzes the conversion of S-adenosyl-L-methionine (SAM) to carboxy-S-adenosyl-L-methionine (Cx-SAM). This is Carboxy-S-adenosyl-L-methionine synthase from Vibrio vulnificus (strain CMCP6).